The primary structure comprises 631 residues: MMANNSTSFFVNLAGNVSQQAARFSNSIANMANKNVSSLNKVSRAISAVSKGFNGLGNITIPIIGVGAAAGATMVGKSMLRTAADFEMAKIRMKQTFGEQGEAADAWLKKFATDTPMAFADTQDAMMRLKTAGIDPMNGSLQALVDYNAKVGGDKANLDGYISAISKGFIKGKLSMEEINPLLERNVKVFEILAKETGGKYTADQMQKMLQEGKLGRKAIHALLRGMGRDAQGAAKEQMKTWDGLVSNLEDTWTSMQARFMEHGAFDALKKELGDFVEWLNEKIDDGTLDDFPKTVSDTLIEALKNLKEMAKDVKPVLESIGSVMSWVSEKAGGYGNLAKFMGALYLGNKVLRNDKVQTLGGWGWSGAKWGYNKIFNRKKGGAGGLADGVAGALGATVGVTPVYVTNFPMGFGGGGGGGYGYDVIEDGRDKDKKTQKKNKPPRPKRGRGSVRSPVAAVAASAAAVPKVAAPVTTASSGVARSVGNGVKSLGRGASKAVPYLGTGLAVAEGVTVLMDDTTNTKEKSEAIGSIAGATAGAIVGQALIPIPVVGAAVGSYLGGWLGEWLGSEVGEYLSDPEPIKNELNGTINIAVKASDQLIATATQAKIQTNQQRDSLETAVQMGTLGMGGMW.

2 helical membrane-spanning segments follow: residues 56-76 (LGNI…TMVG) and 385-405 (GLAD…PVYV). The disordered stretch occupies residues 425–453 (IEDGRDKDKKTQKKNKPPRPKRGRGSVRS). The span at 434 to 449 (KTQKKNKPPRPKRGRG) shows a compositional bias: basic residues. 3 consecutive transmembrane segments (helical) span residues 455–475 (VAAV…VTTA), 495–515 (SKAV…TVLM), and 543–563 (ALIP…GWLG).

It to phage Mu protein gp42.

It localises to the cell membrane. In Haemophilus influenzae (strain ATCC 51907 / DSM 11121 / KW20 / Rd), this protein is Mu-like prophage FluMu protein gp42.